A 115-amino-acid polypeptide reads, in one-letter code: NADH-ubiquinone oxidoreductase chain 3 (115 aa).

3 helical membrane-spanning segments follow: residues 4–24, 55–75, and 87–107; these read LITM…AFWL, FFLV…LLPL, and TMMV…YEWL.

This sequence belongs to the complex I subunit 3 family. In terms of assembly, core subunit of respiratory chain NADH dehydrogenase (Complex I) which is composed of 45 different subunits. Interacts with TMEM186. Interacts with TMEM242.

It localises to the mitochondrion inner membrane. The enzyme catalyses a ubiquinone + NADH + 5 H(+)(in) = a ubiquinol + NAD(+) + 4 H(+)(out). Its function is as follows. Core subunit of the mitochondrial membrane respiratory chain NADH dehydrogenase (Complex I) which catalyzes electron transfer from NADH through the respiratory chain, using ubiquinone as an electron acceptor. Essential for the catalytic activity of complex I. The polypeptide is NADH-ubiquinone oxidoreductase chain 3 (Notiomys edwardsii (Edwards's long-clawed mouse)).